Reading from the N-terminus, the 114-residue chain is T cell receptor alpha variable 24 (114 aa).

The signal sequence occupies residues 1–22 (MEKNPLAAPLLILWFHLDCVSS). The 92-residue stretch at 23-114 (ILNVEQSPQS…EDSATYLCAF (92 aa)) folds into the Ig-like domain. N-linked (GlcNAc...) asparagine glycosylation occurs at asparagine 42. Cysteines 45 and 112 form a disulfide.

As to quaternary structure, alpha-beta TR is a heterodimer composed of an alpha and beta chain; disulfide-linked. The alpha-beta TR is associated with the transmembrane signaling CD3 coreceptor proteins to form the TR-CD3 (TcR or TCR). The assembly of alpha-beta TR heterodimers with CD3 occurs in the endoplasmic reticulum where a single alpha-beta TR heterodimer associates with one CD3D-CD3E heterodimer, one CD3G-CD3E heterodimer and one CD247 homodimer forming a stable octameric structure. CD3D-CD3E and CD3G-CD3E heterodimers preferentially associate with TR alpha and TR beta chains, respectively. The association of the CD247 homodimer is the last step of TcR assembly in the endoplasmic reticulum and is required for transport to the cell surface.

Its subcellular location is the cell membrane. Its function is as follows. V region of the variable domain of T cell receptor (TR) alpha chain that participates in the antigen recognition. Alpha-beta T cell receptors are antigen specific receptors which are essential to the immune response and are present on the cell surface of T lymphocytes. Recognize peptide-major histocompatibility (MH) (pMH) complexes that are displayed by antigen presenting cells (APC), a prerequisite for efficient T cell adaptive immunity against pathogens. Binding of alpha-beta TR to pMH complex initiates TR-CD3 clustering on the cell surface and intracellular activation of LCK that phosphorylates the ITAM motifs of CD3G, CD3D, CD3E and CD247 enabling the recruitment of ZAP70. In turn ZAP70 phosphorylates LAT, which recruits numerous signaling molecules to form the LAT signalosome. The LAT signalosome propagates signal branching to three major signaling pathways, the calcium, the mitogen-activated protein kinase (MAPK) kinase and the nuclear factor NF-kappa-B (NF-kB) pathways, leading to the mobilization of transcription factors that are critical for gene expression and essential for T cell growth and differentiation. The T cell repertoire is generated in the thymus, by V-(D)-J rearrangement. This repertoire is then shaped by intrathymic selection events to generate a peripheral T cell pool of self-MH restricted, non-autoaggressive T cells. Post-thymic interaction of alpha-beta TR with the pMH complexes shapes TR structural and functional avidity. In Homo sapiens (Human), this protein is T cell receptor alpha variable 24.